A 793-amino-acid polypeptide reads, in one-letter code: Potassium transporter 18 (793 aa).

Residues 1–53 (METRTNEYSRKGAMWELERNLDQPMDAEAGRLRNMYREKTYPTILLLRLAFQS) are Cytoplasmic-facing. A helical transmembrane segment spans residues 54–74 (LGVVFGDLGTSPLYVFYNIFP). Residues 75 to 86 (HGIEDTEQVIGA) are Extracellular-facing. The chain crosses the membrane as a helical span at residues 87–107 (LSLIIYSLTLIPLVKYVFIVL). Residues 108–172 (RANDNGQGGT…WLEGHQFRKN (65 aa)) are Cytoplasmic-facing. A helical transmembrane segment spans residues 173-193 (LILILVLFGTCMAVGDGILTP). Topologically, residues 194–214 (AISVLSATGGIQVEEGRMRND) are extracellular. A helical transmembrane segment spans residues 215-235 (VVVIISVLILIGLFSMQHYGT). Residues 236 to 237 (DK) lie on the Cytoplasmic side of the membrane. Residues 238–258 (VSWLFAPIVFVWFILIGILGA) form a helical membrane-spanning segment. The Extracellular portion of the chain corresponds to 259-287 (VNICKYDHSVLKAFNPVYVYRYFKRGKTS). Residues 288-308 (WTSLGGIMLSITGTEALFADL) traverse the membrane as a helical segment. Position 309 (S309) is a topological domain, cytoplasmic. The chain crosses the membrane as a helical span at residues 310-330 (YFPVQAIQIAFTVVVFPCLLL). Over 331–351 (QYTGQAAFIAANTNQVSHAFY) the chain is Extracellular. The chain crosses the membrane as a helical span at residues 352–372 (ISLPAPILWPAFAVATAAAIV). The Cytoplasmic segment spans residues 373 to 409 (ASQATISATYSIIKQALALGCFPRVKIIHTSKKYLGQ). A helical transmembrane segment spans residues 410–430 (IYSPDINWILMVFCIAVTAGF). Topologically, residues 431 to 442 (KNQSQIANAYGT) are extracellular. Residue N432 is glycosylated (N-linked (GlcNAc...) asparagine). The chain crosses the membrane as a helical span at residues 443-463 (AVIMVMLVTTFLMIPIMLLVW). Topologically, residues 464–468 (RSHWT) are cytoplasmic. A helical membrane pass occupies residues 469–489 (LVVAFTVLSLLVEIPYFSAVV). Over 490–494 (RKIDQ) the chain is Extracellular. A helical transmembrane segment spans residues 495–515 (GGWVPLVFAAGFMIIMYVWHY). Topologically, residues 516–793 (GTLKRYEFEM…MLNVGQVFYV (278 aa)) are cytoplasmic.

It belongs to the HAK/KUP transporter (TC 2.A.72.3) family.

It is found in the membrane. In terms of biological role, high-affinity potassium transporter. The sequence is that of Potassium transporter 18 (HAK18) from Oryza sativa subsp. japonica (Rice).